We begin with the raw amino-acid sequence, 165 residues long: Xanthine-guanine phosphoribosyltransferase (165 aa).

Residues 41 to 42 (RG) and 98 to 106 (DDLTDTGKT) each bind 5-phospho-alpha-D-ribose 1-diphosphate. Aspartate 99 is a binding site for Mg(2+). 2 residues coordinate guanine: aspartate 102 and isoleucine 145. Residues aspartate 102 and isoleucine 145 each coordinate xanthine. Residues 102 to 106 (DTGKT) and 144 to 145 (WI) each bind GMP.

Belongs to the purine/pyrimidine phosphoribosyltransferase family. XGPT subfamily. Homotetramer. Requires Mg(2+) as cofactor.

The protein resides in the cell inner membrane. The enzyme catalyses GMP + diphosphate = guanine + 5-phospho-alpha-D-ribose 1-diphosphate. It carries out the reaction XMP + diphosphate = xanthine + 5-phospho-alpha-D-ribose 1-diphosphate. The catalysed reaction is IMP + diphosphate = hypoxanthine + 5-phospho-alpha-D-ribose 1-diphosphate. The protein operates within purine metabolism; GMP biosynthesis via salvage pathway; GMP from guanine: step 1/1. Its pathway is purine metabolism; XMP biosynthesis via salvage pathway; XMP from xanthine: step 1/1. In terms of biological role, purine salvage pathway enzyme that catalyzes the transfer of the ribosyl-5-phosphate group from 5-phospho-alpha-D-ribose 1-diphosphate (PRPP) to the N9 position of the 6-oxopurines guanine and xanthine to form the corresponding ribonucleotides GMP (guanosine 5'-monophosphate) and XMP (xanthosine 5'-monophosphate), with the release of PPi. To a lesser extent, also acts on hypoxanthine. This chain is Xanthine-guanine phosphoribosyltransferase, found in Brucella canis (strain ATCC 23365 / NCTC 10854 / RM-666).